A 938-amino-acid polypeptide reads, in one-letter code: Isoleucine--tRNA ligase (938 aa).

Positions 58 to 68 match the 'HIGH' region motif; that stretch reads PYANGSIHIGH. Lysine 183 carries the post-translational modification N6-acetyllysine. Glutamate 561 is a binding site for L-isoleucyl-5'-AMP. Positions 602-606 match the 'KMSKS' region motif; sequence KMSKS. Lysine 605 provides a ligand contact to ATP. Zn(2+) contacts are provided by cysteine 901, cysteine 904, cysteine 921, and cysteine 924.

Belongs to the class-I aminoacyl-tRNA synthetase family. IleS type 1 subfamily. Monomer. The cofactor is Zn(2+).

The protein resides in the cytoplasm. The enzyme catalyses tRNA(Ile) + L-isoleucine + ATP = L-isoleucyl-tRNA(Ile) + AMP + diphosphate. Its function is as follows. Catalyzes the attachment of isoleucine to tRNA(Ile). As IleRS can inadvertently accommodate and process structurally similar amino acids such as valine, to avoid such errors it has two additional distinct tRNA(Ile)-dependent editing activities. One activity is designated as 'pretransfer' editing and involves the hydrolysis of activated Val-AMP. The other activity is designated 'posttransfer' editing and involves deacylation of mischarged Val-tRNA(Ile). The sequence is that of Isoleucine--tRNA ligase from Escherichia coli (strain ATCC 8739 / DSM 1576 / NBRC 3972 / NCIMB 8545 / WDCM 00012 / Crooks).